Consider the following 625-residue polypeptide: DNA-directed RNA polymerase subunit gamma (625 aa).

The Zn(2+) site is built by cysteine 71, cysteine 73, cysteine 86, and cysteine 89. Residues aspartate 467, aspartate 469, and aspartate 471 each contribute to the Mg(2+) site.

The protein belongs to the RNA polymerase beta' chain family. RpoC1 subfamily. In terms of assembly, in cyanobacteria the RNAP catalytic core is composed of 2 alpha, 1 beta, 1 beta', 1 gamma and 1 omega subunit. When a sigma factor is associated with the core the holoenzyme is formed, which can initiate transcription. It depends on Mg(2+) as a cofactor. Requires Zn(2+) as cofactor.

The catalysed reaction is RNA(n) + a ribonucleoside 5'-triphosphate = RNA(n+1) + diphosphate. DNA-dependent RNA polymerase catalyzes the transcription of DNA into RNA using the four ribonucleoside triphosphates as substrates. This is DNA-directed RNA polymerase subunit gamma from Trichormus variabilis (strain ATCC 29413 / PCC 7937) (Anabaena variabilis).